Consider the following 107-residue polypeptide: MALLLFGLAAAAEIGGCFAFWSVLRLGKNPLWLAPGLVSLVVFAWLLTRSEATYAGRAYAAYGGVYIAASLVWLWLVEGTRPDRWDLAGALLCLAGAAVILFADRSP.

Transmembrane regions (helical) follow at residues 1–21 (MALL…FAFW), 26–46 (LGKN…FAWL), 58–78 (AYAA…WLVE), and 87–107 (LAGA…DRSP).

It belongs to the UPF0060 family.

The protein resides in the cell inner membrane. This is UPF0060 membrane protein glr4174 from Gloeobacter violaceus (strain ATCC 29082 / PCC 7421).